The primary structure comprises 449 residues: MFKTLTQNLTKIFDKLVSSGILTEAQIDAAMRDIRVALLESDVALPVIKDFIAEVKQKALGQEVIKSVSPGQMIIKIIHEEMINLLASSKSETKLNLNSKPPVNFLMVGLQGSGKTTASSKLALRLRNQNKKVLLVSLDTYRPAAQEQLAILANSVQINSLPIVQGEKPLDIVKRAIAEAKISAYDVVIYDTAGRTQIDKAMMEEALAIKKIVEPTETLLVIDSMTGQDAVVTASSFNEKLAISGLILSRIDGDSKGGAALSVKYITKKPIKFLSSGENLIDLEEFDAERLASRILDMGDIISFVEKAASIVDREEAEKTAAKLKKGKFDLNDYLQQMRSIKKMGGFGSILSMLPGSGKIMDQIDQSKLNSKIIEHQEAIILSMTPKERKNPDIINASRRKRIAVGAGTTVQKVNILLKQYKQISEIMKKVSKMNPKNLLRSGIGKLFS.

GTP contacts are provided by residues 109 to 116, 191 to 195, and 249 to 252; these read GLQGSGKT, DTAGR, and SRID.

It belongs to the GTP-binding SRP family. SRP54 subfamily. Part of the signal recognition particle protein translocation system, which is composed of SRP and FtsY. SRP is a ribonucleoprotein composed of Ffh and a 4.5S RNA molecule.

The protein resides in the cytoplasm. It carries out the reaction GTP + H2O = GDP + phosphate + H(+). Involved in targeting and insertion of nascent membrane proteins into the cytoplasmic membrane. Binds to the hydrophobic signal sequence of the ribosome-nascent chain (RNC) as it emerges from the ribosomes. The SRP-RNC complex is then targeted to the cytoplasmic membrane where it interacts with the SRP receptor FtsY. Interaction with FtsY leads to the transfer of the RNC complex to the Sec translocase for insertion into the membrane, the hydrolysis of GTP by both Ffh and FtsY, and the dissociation of the SRP-FtsY complex into the individual components. The sequence is that of Signal recognition particle protein from Rickettsia conorii (strain ATCC VR-613 / Malish 7).